The primary structure comprises 367 residues: 3-dehydroquinate synthase (367 aa).

Residues 111–115 (GVVGD), 135–136 (TS), Lys148, Lys157, and 175–178 (TLDT) each bind NAD(+). 3 residues coordinate Zn(2+): Glu190, His254, and His271.

It belongs to the sugar phosphate cyclases superfamily. Dehydroquinate synthase family. It depends on Co(2+) as a cofactor. The cofactor is Zn(2+). NAD(+) is required as a cofactor.

The protein localises to the cytoplasm. The enzyme catalyses 7-phospho-2-dehydro-3-deoxy-D-arabino-heptonate = 3-dehydroquinate + phosphate. It participates in metabolic intermediate biosynthesis; chorismate biosynthesis; chorismate from D-erythrose 4-phosphate and phosphoenolpyruvate: step 2/7. Catalyzes the conversion of 3-deoxy-D-arabino-heptulosonate 7-phosphate (DAHP) to dehydroquinate (DHQ). This is 3-dehydroquinate synthase from Salinibacter ruber (strain DSM 13855 / M31).